Reading from the N-terminus, the 1142-residue chain is Nucleoporin nup131 (1142 aa).

Belongs to the nucleoporin Nup133 family. Component of the npc107-120 complex which consists of nup85, nup107, nup120, nup131, nup132 and seh1. Interacts with nup107.

The protein resides in the nucleus. Functionally, functions as a component of the nuclear pore complex (NPC). NPC components, collectively referred to as nucleoporins (NUPs), can play the role of both NPC structural components and of docking or interaction partners for transiently associated nuclear transport factors. Active directional transport is assured by both, a Phe-Gly (FG) repeat affinity gradient for these transport factors across the NPC and a transport cofactor concentration gradient across the nuclear envelope. The polypeptide is Nucleoporin nup131 (nup131) (Schizosaccharomyces pombe (strain 972 / ATCC 24843) (Fission yeast)).